We begin with the raw amino-acid sequence, 425 residues long: 2-oxoglutarate and iron-dependent oxygenase JMJD4 homolog (425 aa).

The region spanning alanine 165–leucine 316 is the JmjC domain. Residues histidine 212, aspartate 214, and histidine 284 each contribute to the Fe cation site.

It belongs to the JMJD6 family. Fe(2+) serves as cofactor.

It is found in the nucleus. The protein localises to the cytoplasm. The enzyme catalyses L-lysyl-[protein] + 2-oxoglutarate + O2 = 4-hydroxy-L-lysyl-[protein] + succinate + CO2. Its function is as follows. Catalyzes the 2-oxoglutarate and iron-dependent C4-lysyl hydroxylation of eRF1 thereby promoting the translational termination efficiency of eRF1. May be involved in regulation of chromatin structure, promoting expansion of heterochromatin. The polypeptide is 2-oxoglutarate and iron-dependent oxygenase JMJD4 homolog (Drosophila melanogaster (Fruit fly)).